We begin with the raw amino-acid sequence, 355 residues long: Elongation factor Ts (355 aa).

Positions 82–85 (TDFV) are involved in Mg(2+) ion dislocation from EF-Tu.

It belongs to the EF-Ts family.

The protein resides in the cytoplasm. Functionally, associates with the EF-Tu.GDP complex and induces the exchange of GDP to GTP. It remains bound to the aminoacyl-tRNA.EF-Tu.GTP complex up to the GTP hydrolysis stage on the ribosome. This is Elongation factor Ts from Helicobacter pylori (strain P12).